The chain runs to 99 residues: Class II hydrophobin B (99 aa).

Positions 1 to 15 (MKFFAIAALFAGALA) are cleaved as a signal peptide. 2 disulfide bridges follow: Cys-30–Cys-79 and Cys-40–Cys-70.

This sequence belongs to the cerato-ulmin hydrophobin family.

It localises to the secreted. The protein localises to the cell wall. It is found in the vacuole. The protein resides in the cytoplasmic vesicle. Functionally, aerial growth, conidiation, and dispersal of filamentous fungi in the environment rely upon a capability of their secreting small amphipathic proteins called hydrophobins (HPBs) with low sequence identity. Class I can self-assemble into an outermost layer of rodlet bundles on aerial cell surfaces, conferring cellular hydrophobicity that supports fungal growth, development and dispersal; whereas Class II form highly ordered films at water-air interfaces through intermolecular interactions but contribute nothing to the rodlet structure. Hyd2B contributes to certain cell wall-related features, such as hydrophobicity but is not involved in cell wall-related events during fungal proliferation in host hemocoel. Does not contribute to conidial hydrophobicity. Involved in insect hemocoel colonization independent of cell hydrophobicity. In Beauveria bassiana (strain ARSEF 2860) (White muscardine disease fungus), this protein is Class II hydrophobin B.